We begin with the raw amino-acid sequence, 251 residues long: Coproheme decarboxylase (251 aa).

Fe-coproporphyrin III is bound by residues R133, 147–151 (YPMSK), H174, Q187, and S225. The active site involves Y147.

This sequence belongs to the ChdC family. Type 1 subfamily. Fe-coproporphyrin III serves as cofactor.

The enzyme catalyses Fe-coproporphyrin III + 2 H2O2 + 2 H(+) = heme b + 2 CO2 + 4 H2O. It carries out the reaction Fe-coproporphyrin III + H2O2 + H(+) = harderoheme III + CO2 + 2 H2O. The catalysed reaction is harderoheme III + H2O2 + H(+) = heme b + CO2 + 2 H2O. It functions in the pathway porphyrin-containing compound metabolism; protoheme biosynthesis. Functionally, involved in coproporphyrin-dependent heme b biosynthesis. Catalyzes the decarboxylation of Fe-coproporphyrin III (coproheme) to heme b (protoheme IX), the last step of the pathway. The reaction occurs in a stepwise manner with a three-propionate intermediate. This Listeria innocua serovar 6a (strain ATCC BAA-680 / CLIP 11262) protein is Coproheme decarboxylase.